Reading from the N-terminus, the 382-residue chain is UDP-N-acetylglucosamine--N-acetylmuramyl-(pentapeptide) pyrophosphoryl-undecaprenol N-acetylglucosamine transferase (382 aa).

UDP-N-acetyl-alpha-D-glucosamine is bound by residues threonine 11–glycine 13, asparagine 124, arginine 165, serine 200, isoleucine 254, and glutamine 299.

The protein belongs to the glycosyltransferase 28 family. MurG subfamily.

The protein resides in the cell inner membrane. It catalyses the reaction di-trans,octa-cis-undecaprenyl diphospho-N-acetyl-alpha-D-muramoyl-L-alanyl-D-glutamyl-meso-2,6-diaminopimeloyl-D-alanyl-D-alanine + UDP-N-acetyl-alpha-D-glucosamine = di-trans,octa-cis-undecaprenyl diphospho-[N-acetyl-alpha-D-glucosaminyl-(1-&gt;4)]-N-acetyl-alpha-D-muramoyl-L-alanyl-D-glutamyl-meso-2,6-diaminopimeloyl-D-alanyl-D-alanine + UDP + H(+). The protein operates within cell wall biogenesis; peptidoglycan biosynthesis. Functionally, cell wall formation. Catalyzes the transfer of a GlcNAc subunit on undecaprenyl-pyrophosphoryl-MurNAc-pentapeptide (lipid intermediate I) to form undecaprenyl-pyrophosphoryl-MurNAc-(pentapeptide)GlcNAc (lipid intermediate II). The polypeptide is UDP-N-acetylglucosamine--N-acetylmuramyl-(pentapeptide) pyrophosphoryl-undecaprenol N-acetylglucosamine transferase (Nitratidesulfovibrio vulgaris (strain DSM 19637 / Miyazaki F) (Desulfovibrio vulgaris)).